Here is a 476-residue protein sequence, read N- to C-terminus: Argininosuccinate lyase (476 aa).

Belongs to the lyase 1 family. Argininosuccinate lyase subfamily.

Its subcellular location is the cytoplasm. It carries out the reaction 2-(N(omega)-L-arginino)succinate = fumarate + L-arginine. Its pathway is amino-acid biosynthesis; L-arginine biosynthesis; L-arginine from L-ornithine and carbamoyl phosphate: step 3/3. The protein is Argininosuccinate lyase of Acaryochloris marina (strain MBIC 11017).